A 186-amino-acid polypeptide reads, in one-letter code: Large ribosomal subunit protein uL10 (186 aa).

The protein belongs to the universal ribosomal protein uL10 family. In terms of assembly, part of the ribosomal stalk of the 50S ribosomal subunit. The N-terminus interacts with L11 and the large rRNA to form the base of the stalk. The C-terminus forms an elongated spine to which L12 dimers bind in a sequential fashion forming a multimeric L10(L12)X complex.

Its function is as follows. Forms part of the ribosomal stalk, playing a central role in the interaction of the ribosome with GTP-bound translation factors. This Streptomyces virginiae (Streptomyces cinnamonensis) protein is Large ribosomal subunit protein uL10 (rplJ).